A 289-amino-acid polypeptide reads, in one-letter code: ATP synthase subunit a (289 aa).

Helical transmembrane passes span 43–63 (AFHL…LFIF), 103–123 (VIAP…AVDL), 160–180 (FCVF…GGFI), 193–213 (IFVQ…TLIA), 232–252 (VFIL…GLGV), and 259–279 (AVFH…LTIV).

Belongs to the ATPase A chain family. As to quaternary structure, F-type ATPases have 2 components, CF(1) - the catalytic core - and CF(0) - the membrane proton channel. CF(1) has five subunits: alpha(3), beta(3), gamma(1), delta(1), epsilon(1). CF(0) has three main subunits: a(1), b(2) and c(9-12). The alpha and beta chains form an alternating ring which encloses part of the gamma chain. CF(1) is attached to CF(0) by a central stalk formed by the gamma and epsilon chains, while a peripheral stalk is formed by the delta and b chains.

It localises to the cell inner membrane. Key component of the proton channel; it plays a direct role in the translocation of protons across the membrane. The polypeptide is ATP synthase subunit a (Pseudomonas putida (strain GB-1)).